Here is a 217-residue protein sequence, read N- to C-terminus: Large ribosomal subunit protein uL3 (217 aa).

Residues V137 to S160 form a disordered region.

Belongs to the universal ribosomal protein uL3 family. Part of the 50S ribosomal subunit. Forms a cluster with proteins L14 and L19.

Functionally, one of the primary rRNA binding proteins, it binds directly near the 3'-end of the 23S rRNA, where it nucleates assembly of the 50S subunit. The sequence is that of Large ribosomal subunit protein uL3 from Clavibacter sepedonicus (Clavibacter michiganensis subsp. sepedonicus).